A 274-amino-acid chain; its full sequence is Serine acetyltransferase (274 aa).

Belongs to the transferase hexapeptide repeat family.

The protein localises to the cytoplasm. It carries out the reaction L-serine + acetyl-CoA = O-acetyl-L-serine + CoA. It participates in amino-acid biosynthesis; L-cysteine biosynthesis; L-cysteine from L-serine: step 1/2. This Buchnera aphidicola subsp. Acyrthosiphon pisum (strain APS) (Acyrthosiphon pisum symbiotic bacterium) protein is Serine acetyltransferase (cysE).